We begin with the raw amino-acid sequence, 349 residues long: Delta(7)-sterol 5(6)-desaturase ERG3A (349 aa).

A run of 3 helical transmembrane segments spans residues 84–104 (ITWI…YIFI), 124–144 (IIAA…FFLL), and 162–182 (LWYD…CIYW). Residues 170 to 296 (PLFLLFTDFC…FTAFDRMGGT (127 aa)) enclose the Fatty acid hydroxylase domain. A Histidine box-1 motif is present at residues 184–188 (HRWLH). Residues 197–201 (HKLHH) carry the Histidine box-2 motif. Residues 227-247 (HIFPFIFPLQKMAYVALFVFV) traverse the membrane as a helical segment. Positions 272 to 276 (HSLHH) match the Histidine box-3 motif.

This sequence belongs to the sterol desaturase family.

The protein localises to the endoplasmic reticulum membrane. The enzyme catalyses episterol + 2 Fe(II)-[cytochrome b5] + O2 + 2 H(+) = 5-dehydroepisterol + 2 Fe(III)-[cytochrome b5] + 2 H2O. The protein operates within steroid metabolism; ergosterol biosynthesis. C-5 sterol desaturase; part of the third module of ergosterol biosynthesis pathway that includes the late steps of the pathway. ERG3A and ERG3BB catalyze the introduction of a C-5 double bond in the B ring to produce 5-dehydroepisterol. The third module or late pathway involves the ergosterol synthesis itself through consecutive reactions that mainly occur in the endoplasmic reticulum (ER) membrane. Firstly, the squalene synthase ERG9 catalyzes the condensation of 2 farnesyl pyrophosphate moieties to form squalene, which is the precursor of all steroids. Squalene synthase is crucial for balancing the incorporation of farnesyl diphosphate (FPP) into sterol and nonsterol isoprene synthesis. Secondly, squalene is converted into lanosterol by the consecutive action of the squalene epoxidase ERG1 and the lanosterol synthase ERG7. Then, the delta(24)-sterol C-methyltransferase ERG6 methylates lanosterol at C-24 to produce eburicol. Eburicol is the substrate of the sterol 14-alpha demethylase encoded by CYP51A, CYP51B and CYP51C, to yield 4,4,24-trimethyl ergosta-8,14,24(28)-trienol. CYP51B encodes the enzyme primarily responsible for sterol 14-alpha-demethylation, and plays an essential role in ascospore formation. CYP51A encodes an additional sterol 14-alpha-demethylase, induced on ergosterol depletion and responsible for the intrinsic variation in azole sensitivity. The third CYP51 isoform, CYP51C, does not encode a sterol 14-alpha-demethylase, but is required for full virulence on host wheat ears. The C-14 reductase ERG24 then reduces the C14=C15 double bond which leads to 4,4-dimethylfecosterol. A sequence of further demethylations at C-4, involving the C-4 demethylation complex containing the C-4 methylsterol oxidases ERG25, the sterol-4-alpha-carboxylate 3-dehydrogenase ERG26 and the 3-keto-steroid reductase ERG27, leads to the production of fecosterol via 4-methylfecosterol. ERG28 has a role as a scaffold to help anchor ERG25, ERG26 and ERG27 to the endoplasmic reticulum. The C-8 sterol isomerase ERG2 then catalyzes the reaction which results in unsaturation at C-7 in the B ring of sterols and thus converts fecosterol to episterol. The sterol-C5-desaturases ERG3A and ERG3BB then catalyze the introduction of a C-5 double bond in the B ring to produce 5-dehydroepisterol. The C-22 sterol desaturases ERG5A and ERG5B further convert 5-dehydroepisterol into ergosta-5,7,22,24(28)-tetraen-3beta-ol by forming the C-22(23) double bond in the sterol side chain. Finally, ergosta-5,7,22,24(28)-tetraen-3beta-ol is substrate of the C-24(28) sterol reductase ERG4 to produce ergosterol. The protein is Delta(7)-sterol 5(6)-desaturase ERG3A of Gibberella zeae (strain ATCC MYA-4620 / CBS 123657 / FGSC 9075 / NRRL 31084 / PH-1) (Wheat head blight fungus).